Reading from the N-terminus, the 549-residue chain is Cobalt-dependent inorganic pyrophosphatase (549 aa).

2 consecutive CBS domains span residues 74 to 130 and 252 to 310; these read EMDK…IWDS and MTKD…VIQV. Residues K100, 116-119, T253, V258, and 278-280 each bind AMP; these read STSN and YSN.

It belongs to the PPase family. Homodimer. It depends on Co(2+) as a cofactor. The cofactor is Mn(2+). Mg(2+) serves as cofactor.

It catalyses the reaction diphosphate + H2O = 2 phosphate + H(+). Its activity is regulated as follows. Inhibited by AMP and ADP with 25% and 35% of activity remaining, respectively, at saturating conditions. Activated 5-fold by diadenosine polyphosphates(Ap[n]A) with n&gt;2 (Ap3A, Ap4A, Ap5A, Ap6A) at saturating conditions. This is Cobalt-dependent inorganic pyrophosphatase from Clostridium perfringens (strain 13 / Type A).